A 359-amino-acid chain; its full sequence is 3-dehydroquinate synthase (359 aa).

Residues 71-76 (DGEQYK), 105-109 (GVIGD), 129-130 (TT), Lys-142, Lys-151, and 169-172 (CLKT) each bind NAD(+). Residues Glu-184, His-247, and His-264 each contribute to the Zn(2+) site.

It belongs to the sugar phosphate cyclases superfamily. Dehydroquinate synthase family. Requires Co(2+) as cofactor. Zn(2+) is required as a cofactor. The cofactor is NAD(+).

It localises to the cytoplasm. It carries out the reaction 7-phospho-2-dehydro-3-deoxy-D-arabino-heptonate = 3-dehydroquinate + phosphate. The protein operates within metabolic intermediate biosynthesis; chorismate biosynthesis; chorismate from D-erythrose 4-phosphate and phosphoenolpyruvate: step 2/7. Catalyzes the conversion of 3-deoxy-D-arabino-heptulosonate 7-phosphate (DAHP) to dehydroquinate (DHQ). This is 3-dehydroquinate synthase from Shewanella amazonensis (strain ATCC BAA-1098 / SB2B).